Reading from the N-terminus, the 224-residue chain is Methylamine utilization ferredoxin-type protein MauM (224 aa).

Residues 1–41 (MEARMTGRRKVTRRDAMADAARAVGVACLGGFSLAALVRTA) form the signal peptide. 4Fe-4S ferredoxin-type domains follow at residues 54-84 (ALPE…LAEW), 91-124 (GTPF…RDIP), 133-169 (VAVL…LEPQ), and 177-208 (MIPV…VLPR). [4Fe-4S] cluster contacts are provided by Cys-64, Cys-67, Cys-70, Cys-74, Cys-102, Cys-105, Cys-110, Cys-114, Cys-142, Cys-150, Cys-153, Cys-157, Cys-186, Cys-189, Cys-192, and Cys-196.

Its pathway is one-carbon metabolism; methylamine degradation. Functionally, involved in electron transfer. This chain is Methylamine utilization ferredoxin-type protein MauM (mauM), found in Paracoccus denitrificans (strain Pd 1222).